We begin with the raw amino-acid sequence, 196 residues long: Zinc finger C2H2 protein ECU03_0940 (196 aa).

2 consecutive C2H2-type zinc fingers follow at residues 130–155 (YACE…KEGH) and 166–191 (YVCP…KHYH).

The sequence is that of Zinc finger C2H2 protein ECU03_0940 from Encephalitozoon cuniculi (strain GB-M1) (Microsporidian parasite).